The primary structure comprises 609 residues: Ataxin-10 homolog (609 aa).

Disordered stretches follow at residues 265–293 (KSTT…TTTG), 405–426 (KQQE…SKDS), and 461–490 (SDTN…KGFN). Over residues 266–292 (STTESTTESTTTESTDSTTDSTTTTTT) the composition is skewed to low complexity. Residues 466-479 (SSSSSSSSSSSTTT) show a composition bias toward low complexity. The segment covering 480 to 490 (DGETVTSKGFN) has biased composition (polar residues).

This sequence belongs to the ATXN10 family.

Its function is as follows. May play a role in the regulation of cytokinesis. This Dictyostelium discoideum (Social amoeba) protein is Ataxin-10 homolog (atxn10).